A 1037-amino-acid chain; its full sequence is Protein brain tumor (1037 aa).

Disordered regions lie at residues 29–63 and 159–178; these read SDSP…SRSE and SNSS…SPPR. Composition is skewed to polar residues over residues 31-42 and 54-63; these read SPLTLSGSSPPA and GGSSVKSRSE. Positions 159–175 are enriched in low complexity; that stretch reads SNSSSNSSSSNTSANGS. A B box-type 1; atypical zinc finger spans residues 174-222; it reads GSPPRCTACKSKCSDAVAKCFECQSYLCANCVTAHEFMHCFNGHNVCLI. 8 residues coordinate Zn(2+): Cys-179, Cys-182, Cys-204, His-208, Cys-328, His-331, Cys-351, and His-356. The B box-type 2 zinc finger occupies 323-366; that stretch reads QRQLFCPRHKQELLKFSCRTCCILVCKECIVLEHSTGLHELENV. Polar residues predominate over residues 543–554; it reads GPTGMSLTSNGH. Residues 543–606 are disordered; that stretch reads GPTGMSLTSN…TAHHQQLQAQ (64 aa). The span at 565-577 shows a compositional bias: low complexity; sequence QSASNSSASSAGS. Basic residues predominate over residues 579–598; sequence HHGHHQQSHHHGHHNHHQTA. 5 NHL repeats span residues 767-810, 814-859, 860-901, 902-944, and 945-988; these read HCKF…FDKE, KFQF…YNQY, GQFV…FDQN, GNVL…FNYE, and GQYL…FTQD.

As to quaternary structure, interacts with nanos (nos) and pum. Acts via the formation of a quaternary complex composed of pum, nanos, brat and the 3'-UTR mRNA of hb. Not recruited by nanos and pum to cyclin B 3'-UTR mRNA. Might interact with mira; the interaction seems to be important for brat localization during mitosis. Interacts with Ago1. Expressed during embryogenesis, mainly in nervous tissues. Expressed in the embryonic central and peripheral nervous systems including the embryonic brain. In third instar larva it is expressed in the larval central nervous system including the brain and the ventral ganglion, in two glands (the ring gland and the salivary gland, and in parts of the foregut) the gastric caeca and the proventriculus.

It localises to the cytoplasm. The protein resides in the cell cortex. An NHL-domain family protein that functions as a translational repressor to inhibit cell proliferation. Plays a central role in translation repression of hb mRNA by being recruited by nanos (nos) and pum to the Nanos Response Element (NRE), a 16 bp sequence in the hb mRNA 3'-UTR. Probably recruited by other proteins to repress translation of other mRNAs in other tissues. Negatively regulates expression of Myc in a 3'-UTR dependent manner in both neural progenitor and epithelial cells. Regulates expression of mei-P26, possibly at transcriptional level. Involved in the regulation of ribosomal RNA synthesis and cell growth. Participates in abdominal segmentation and imaginal disk development. During neuroblast division, segregates asymmetrically and inhibits self-renewal of one of the two daughter cells. Together with the asymmetrically segregating transcription factor prospero ensures that the daughter cell will stop growing, exit the cell cycle, and differentiate into neurons possibly by modulating the function of dm in ganglion mother cells (GMC). Restricts developmental potential of type II intermediary neuronal progenitor (INP) cells playing a role in proliferation and maturation of the neuroblasts. The chain is Protein brain tumor from Drosophila melanogaster (Fruit fly).